We begin with the raw amino-acid sequence, 427 residues long: MVSHYYNTLPYTQKHSAANLAYASAAGQPWNWTPNYHHTPPNHQFLGDVDSSHAAHHAAAAHQMYYNSHHMFHSAAAASAGEWHSPASSTADNFVQNVPTSAHQLMQQHHHHHAHASSSSASSGSSSSGGAPGAPQLNETNSSIGVGGAGGGGGVGGATDGGPGSAPPNHQQHIAEGLPSPPITVSGSEISSPGAPTSASSPHHHLAHHLSAVANNNNNNNNNNNSPSTHNNNNNNNSVSNNNRTSPSKPPYFDWMKKPAYPAQPQPGKTRTKDKYRVVYTDFQRLELEKEYCTSRYITIRRKSELAQTLSLSERQVKIWFQNRRAKERKQNKKGSDPNVMGVGVQHADYSQLLDAKAKLEPGLHLSHSLAHSMNPMAAMNIPAMRLHPHLAAHSHSLAAVAAHSHQLQQQHSAQMSAAAAVGTLSM.

A disordered region spans residues 104–273; that stretch reads QLMQQHHHHH…QPQPGKTRTK (170 aa). The span at 116-129 shows a compositional bias: low complexity; the sequence is ASSSSASSGSSSSG. Positions 145 to 164 are enriched in gly residues; it reads GVGGAGGGGGVGGATDGGPG. A compositionally biased stretch (polar residues) spans 183-195; that stretch reads ITVSGSEISSPGA. Over residues 209-243 the composition is skewed to low complexity; that stretch reads HLSAVANNNNNNNNNNNSPSTHNNNNNNNSVSNNN. A Phosphothreonine modification is found at T245. An Antp-type hexapeptide motif is present at residues 252–257; sequence YFDWMK. A DNA-binding region (homeobox) is located at residues 273–332; sequence KDKYRVVYTDFQRLELEKEYCTSRYITIRRKSELAQTLSLSERQVKIWFQNRRAKERKQN.

This sequence belongs to the Caudal homeobox family. In terms of tissue distribution, maternally localized in an anteroposterior gradient in the syncytial blastoderm. Also expressed in the pole cells. Zygotically localized in the primordia of the terminal abdominal segment, the hindgut and in the posterior midgut rudiment. Expressed in the gut, the gonads and parts of the genital disks of third instar larvae (at protein level).

The protein localises to the nucleus. Caudal (cad) is one of a number of transcription factors controlling segmentation of the embryo. Further transcriptional regulation via a 5' flanking region containing DNA replication-related elements (DRE) and by dref also regulated by trh and tgo via the CNS midline element. Alongside Bicoid (bcd), caudal forms concentration gradients down the anterior-posterior (A-P) axis providing positional information and subsequent induction of the gap genes. Plays a role in gastrulation/germ band extension, hindgut morphogenesis, positive regulation of cell proliferation, genital disk development and pattern formation. Acts as a key regulator of the Hox gene network and activates transcription via the downstream core promoter element (DPE) relative to the TATA box. Plays a role in the establishment of the hindgut and in the invagination of the hindgut primordium during gastrulation. These effects on the gut are achieved by acting combinatorially at the posterior of the embryo to activate transcription of different targets including fog, fkh and wg. Caudal is involved in regulation of proliferation through transactivation of the E2F gene. Postembryonically its function is mostly restricted to the intestine where it regulates antimicrobial peptide (AMP) levels preserving the normal gut flora. The sequence is that of Homeotic protein caudal (cad) from Drosophila melanogaster (Fruit fly).